A 364-amino-acid chain; its full sequence is tRNA N6-adenosine threonylcarbamoyltransferase (364 aa).

Residues H118 and H122 each coordinate Fe cation. Substrate contacts are provided by residues 140-144 (LVSGG), D173, G186, and N288. Fe cation is bound at residue D316.

Belongs to the KAE1 / TsaD family. Fe(2+) serves as cofactor.

The protein localises to the cytoplasm. It catalyses the reaction L-threonylcarbamoyladenylate + adenosine(37) in tRNA = N(6)-L-threonylcarbamoyladenosine(37) in tRNA + AMP + H(+). Its function is as follows. Required for the formation of a threonylcarbamoyl group on adenosine at position 37 (t(6)A37) in tRNAs that read codons beginning with adenine. Is involved in the transfer of the threonylcarbamoyl moiety of threonylcarbamoyl-AMP (TC-AMP) to the N6 group of A37, together with TsaE and TsaB. TsaD likely plays a direct catalytic role in this reaction. In Cereibacter sphaeroides (strain ATCC 17023 / DSM 158 / JCM 6121 / CCUG 31486 / LMG 2827 / NBRC 12203 / NCIMB 8253 / ATH 2.4.1.) (Rhodobacter sphaeroides), this protein is tRNA N6-adenosine threonylcarbamoyltransferase.